A 224-amino-acid chain; its full sequence is Small ribosomal subunit protein uS5 (224 aa).

The segment at 1–38 (MAEQSAGGQGAPEGRDSRDSREGRGRRDGGRGGRDSDK) is disordered. Residues 13 to 38 (EGRDSRDSREGRGRRDGGRGGRDSDK) are compositionally biased toward basic and acidic residues. The S5 DRBM domain maps to 41-104 (YLERVVAINR…EEARKGFFRV (64 aa)).

The protein belongs to the universal ribosomal protein uS5 family. Part of the 30S ribosomal subunit. Contacts proteins S4 and S8.

Its function is as follows. With S4 and S12 plays an important role in translational accuracy. Located at the back of the 30S subunit body where it stabilizes the conformation of the head with respect to the body. The protein is Small ribosomal subunit protein uS5 of Mycobacterium ulcerans (strain Agy99).